The chain runs to 119 residues: Ribonuclease P protein component (119 aa).

The protein belongs to the RnpA family. In terms of assembly, consists of a catalytic RNA component (M1 or rnpB) and a protein subunit.

It catalyses the reaction Endonucleolytic cleavage of RNA, removing 5'-extranucleotides from tRNA precursor.. Its function is as follows. RNaseP catalyzes the removal of the 5'-leader sequence from pre-tRNA to produce the mature 5'-terminus. It can also cleave other RNA substrates such as 4.5S RNA. The protein component plays an auxiliary but essential role in vivo by binding to the 5'-leader sequence and broadening the substrate specificity of the ribozyme. The chain is Ribonuclease P protein component from Escherichia fergusonii (strain ATCC 35469 / DSM 13698 / CCUG 18766 / IAM 14443 / JCM 21226 / LMG 7866 / NBRC 102419 / NCTC 12128 / CDC 0568-73).